Consider the following 292-residue polypeptide: Thyroxine 5-deiodinase (292 aa).

Over 1–30 (VVGEGRGALGGAATMLRSLLLHSLRLCAQT) the chain is Cytoplasmic. A helical; Signal-anchor for type II membrane protein transmembrane segment spans residues 31–50 (ASCLVLFPRFLGTAFMLWLL). Residues 51–292 (DFLCIRKHLL…QLHGPQPRRV (242 aa)) lie on the Extracellular side of the membrane. Residue Sec-158 is part of the active site. Sec-158 is a non-standard amino acid (selenocysteine).

This sequence belongs to the iodothyronine deiodinase family. Monomer. Homodimer. May undergo minor heretodimerization with DIO1 and DIO2.

The protein resides in the cell membrane. It localises to the endosome membrane. It carries out the reaction 3,3',5'-triiodo-L-thyronine + iodide + A + H(+) = L-thyroxine + AH2. The enzyme catalyses 3,3'-diiodo-L-thyronine + iodide + A + H(+) = 3,3',5-triiodo-L-thyronine + AH2. The catalysed reaction is 3-iodo-L-thyronine + iodide + A + H(+) = 3,5-diiodo-L-thyronine + AH2. It catalyses the reaction L-thyronine + iodide + A + H(+) = 3-iodo-L-thyronine + AH2. It carries out the reaction 3',5'-diiodo-L-thyronine + iodide + A + H(+) = 3,3',5'-triiodo-L-thyronine + AH2. The enzyme catalyses 3'-iodo-L-thyronine + iodide + A + H(+) = 3,3'-diiodo-L-thyronine + AH2. The catalysed reaction is 3,3',5'-triiodothyronamine + iodide + A + H(+) = 3,3',5,5'-tetraiodothyronamine + AH2. It catalyses the reaction 3',5'-diiodothyronamine + iodide + A + H(+) = 3,3',5'-triiodothyronamine + AH2. It carries out the reaction 3,3'-diiodothyronamine + iodide + A + H(+) = 3,3',5-triiodothyronamine + AH2. The enzyme catalyses 3-iodothyronamine + iodide + A + H(+) = 3,5-diiodothyronamine + AH2. The catalysed reaction is 3'-iodothyronamine + iodide + A + H(+) = 3,3'-diiodothyronamine + AH2. It catalyses the reaction thyronamine + iodide + A + H(+) = 3-iodothyronamine + AH2. Functionally, plays a crucial role in the metabolism of thyroid hormones (TH) and has specific roles in TH activation and inactivation by deiodination.Catalyzes the deiodination of L-thyroxine (T4) to 3,3',5'-triiodothyronine (rT3), 3,5,3'-triiodothyronine (T3) to 3,3'-diiodothyronine (3,3'-T2), 3,5-diiodothyronine (3,5-T2) to 3-monoiodothyronine (3-T1), rT3 to 3',5'-diiodothyronine (3',5'-T2) and 3,3'-T2 to 3'-monoiodothyronine (3'-T1) via inner-ring deiodination (IRD). Catalyzes the deiodination of 3-T1 to L-thyronine (T0) via outer-ring deiodination (ORD). Catalyzes the tyrosyl ring deiodinations of 3,3',5,5'-tetraiodothyronamine, 3,3',5'-triiodothyronamine, 3,5,3'-triiodothyronamine, 3,5-diiodothyronamine, 3,3'-diiodothyronamine and 3-iodothyronamine. This chain is Thyroxine 5-deiodinase (DIO3), found in Ovis aries (Sheep).